A 146-amino-acid chain; its full sequence is Ribosome-binding factor A (146 aa).

Residues 122–146 (QQQFGSVDDVTENDIDEADDTEGKA) form a disordered region. Acidic residues predominate over residues 130-146 (DVTENDIDEADDTEGKA).

It belongs to the RbfA family. Monomer. Binds 30S ribosomal subunits, but not 50S ribosomal subunits or 70S ribosomes.

Its subcellular location is the cytoplasm. Functionally, one of several proteins that assist in the late maturation steps of the functional core of the 30S ribosomal subunit. Associates with free 30S ribosomal subunits (but not with 30S subunits that are part of 70S ribosomes or polysomes). Required for efficient processing of 16S rRNA. May interact with the 5'-terminal helix region of 16S rRNA. The polypeptide is Ribosome-binding factor A (Shewanella sp. (strain MR-7)).